The following is a 302-amino-acid chain: Sulfate adenylyltransferase subunit 2 (302 aa).

It belongs to the PAPS reductase family. CysD subfamily. Heterodimer composed of CysD, the smaller subunit, and CysN.

The catalysed reaction is sulfate + ATP + H(+) = adenosine 5'-phosphosulfate + diphosphate. The protein operates within sulfur metabolism; hydrogen sulfide biosynthesis; sulfite from sulfate: step 1/3. In terms of biological role, with CysN forms the ATP sulfurylase (ATPS) that catalyzes the adenylation of sulfate producing adenosine 5'-phosphosulfate (APS) and diphosphate, the first enzymatic step in sulfur assimilation pathway. APS synthesis involves the formation of a high-energy phosphoric-sulfuric acid anhydride bond driven by GTP hydrolysis by CysN coupled to ATP hydrolysis by CysD. This Salmonella schwarzengrund (strain CVM19633) protein is Sulfate adenylyltransferase subunit 2.